We begin with the raw amino-acid sequence, 115 residues long: Large ribosomal subunit protein uL22 (115 aa).

The protein belongs to the universal ribosomal protein uL22 family. In terms of assembly, part of the 50S ribosomal subunit.

Its function is as follows. This protein binds specifically to 23S rRNA; its binding is stimulated by other ribosomal proteins, e.g. L4, L17, and L20. It is important during the early stages of 50S assembly. It makes multiple contacts with different domains of the 23S rRNA in the assembled 50S subunit and ribosome. In terms of biological role, the globular domain of the protein is located near the polypeptide exit tunnel on the outside of the subunit, while an extended beta-hairpin is found that lines the wall of the exit tunnel in the center of the 70S ribosome. The chain is Large ribosomal subunit protein uL22 from Lactiplantibacillus plantarum (strain ATCC BAA-793 / NCIMB 8826 / WCFS1) (Lactobacillus plantarum).